Consider the following 189-residue polypeptide: MTEYKLVVVGAGGVGKSALTIQLIQNHFVDEYDPTIEDSYRKQVVIDGETCLLDILDTAGQEEYSAMRDQYMRTGEGFLLVFAVNSAKSFEDIGTYREQIKRVKDAEEVPMVLVGNKCDLPSWNVQNEQAREVAKQYGIPYIETSAKTRMGVDDAFYTLVREIRKDKDNKGRKGRKTNKPNRRFKCKML.

Position 10-17 (G10–S17) interacts with GTP. An Effector region motif is present at residues Y32–Y40. GTP-binding positions include D57–Q61 and N116–D119. C186 carries the post-translational modification Cysteine methyl ester. A lipid anchor (S-geranylgeranyl cysteine) is attached at C186. Positions K187–L189 are cleaved as a propeptide — removed in mature form.

This sequence belongs to the small GTPase superfamily. Ras family.

It localises to the cell membrane. It carries out the reaction GTP + H2O = GDP + phosphate + H(+). With respect to regulation, alternates between an inactive form bound to GDP and an active form bound to GTP. Activated by a guanine nucleotide-exchange factor (GEF) and inactivated by a GTPase-activating protein (GAP). Its function is as follows. Ras proteins bind GDP/GTP and possess intrinsic GTPase activity. Plays a role in eye development by regulating cell growth, survival of postmitotic ommatidial cells and differentiation of photoreceptor cells. During larval development, mediates Ptth/tor signaling leading to the production of ecdysone, a hormone required for the initiation of metamorphosis. The chain is Ras-like protein 1 from Drosophila grimshawi (Hawaiian fruit fly).